A 207-amino-acid polypeptide reads, in one-letter code: LexA repressor (207 aa).

A DNA-binding region (H-T-H motif) is located at residues 28–48 (VREIGEAVGLASSSTVHGHLS). Residues S130 and K168 each act as for autocatalytic cleavage activity in the active site.

The protein belongs to the peptidase S24 family. In terms of assembly, homodimer.

The enzyme catalyses Hydrolysis of Ala-|-Gly bond in repressor LexA.. Represses a number of genes involved in the response to DNA damage (SOS response), including recA and lexA. In the presence of single-stranded DNA, RecA interacts with LexA causing an autocatalytic cleavage which disrupts the DNA-binding part of LexA, leading to derepression of the SOS regulon and eventually DNA repair. In Staphylococcus aureus (strain MSSA476), this protein is LexA repressor.